The primary structure comprises 498 residues: ATP synthase subunit beta, chloroplastic (498 aa).

ATP is bound at residue 172 to 179; it reads GGAGVGKT.

This sequence belongs to the ATPase alpha/beta chains family. As to quaternary structure, F-type ATPases have 2 components, CF(1) - the catalytic core - and CF(0) - the membrane proton channel. CF(1) has five subunits: alpha(3), beta(3), gamma(1), delta(1), epsilon(1). CF(0) has four main subunits: a(1), b(1), b'(1) and c(9-12).

It localises to the plastid. It is found in the chloroplast thylakoid membrane. The catalysed reaction is ATP + H2O + 4 H(+)(in) = ADP + phosphate + 5 H(+)(out). Its function is as follows. Produces ATP from ADP in the presence of a proton gradient across the membrane. The catalytic sites are hosted primarily by the beta subunits. In Balaka seemannii, this protein is ATP synthase subunit beta, chloroplastic.